The following is a 533-amino-acid chain: Receptor homology region, transmembrane domain- and RING domain-containing protein 1 (533 aa).

Positions 1–26 (MNRRRTMLLLICLCATFCLMTQLGAA) are cleaved as a signal peptide. The Lumenal portion of the chain corresponds to 27–167 (NVVLMGTNLT…LPAFENSAWS (141 aa)). Asparagine 34 is a glycosylation site (N-linked (GlcNAc...) asparagine). A disulfide bond links cysteine 68 and cysteine 91. Residues 84 to 145 (ALIIRGGCTF…ISKASGEVLK (62 aa)) form the PA domain. A helical transmembrane segment spans residues 168 to 188 (IMAISFISLLAMSAVLATCFF). Over 189-533 (VRRHHIRRDR…MASAQSLPGC (345 aa)) the chain is Cytoplasmic. An RING-type; atypical zinc finger spans residues 236 to 278 (CAICLEDYNVGEKLRVLPCRHKFHAACVDLWLTTWRTFCPVCK). Disordered stretches follow at residues 309–329 (SFRS…PSSQ) and 440–476 (LRRC…LAGA). Positions 448–463 (PSLSTMAPQSPQQSQL) are enriched in polar residues.

The protein resides in the prevacuolar compartment membrane. It localises to the protein storage vacuole membrane. Its subcellular location is the golgi apparatus membrane. Functionally, involved in the trafficking of vacuolar proteins. Functions probably as a sorting receptor for protein trafficking to the protein storage vacuole (PSV) by binding the C-terminal vacuolar sorting determinant (VSD) of vacuolar-sorted proteins. The sequence is that of Receptor homology region, transmembrane domain- and RING domain-containing protein 1 from Oryza sativa subsp. japonica (Rice).